The primary structure comprises 38 residues: Glucagon-like peptide (38 aa).

The protein belongs to the glucagon family.

It localises to the secreted. The protein is Glucagon-like peptide of Hydrolagus colliei (Spotted ratfish).